Reading from the N-terminus, the 67-residue chain is ATP synthase F(0) complex subunit 8 (67 aa).

The chain crosses the membrane as a helical span at residues 8–24 (TWFIMIFSMFLTLFILF). Residue Lys54 is modified to N6-acetyllysine; alternate. An N6-succinyllysine; alternate modification is found at Lys54. Lys57 is modified (N6-acetyllysine).

This sequence belongs to the ATPase protein 8 family. In terms of assembly, component of the ATP synthase complex composed at least of ATP5F1A/subunit alpha, ATP5F1B/subunit beta, ATP5MC1/subunit c (homooctomer), MT-ATP6/subunit a, MT-ATP8/subunit 8, ATP5ME/subunit e, ATP5MF/subunit f, ATP5MG/subunit g, ATP5MK/subunit k, ATP5MJ/subunit j, ATP5F1C/subunit gamma, ATP5F1D/subunit delta, ATP5F1E/subunit epsilon, ATP5PF/subunit F6, ATP5PB/subunit b, ATP5PD/subunit d, ATP5PO/subunit OSCP. ATP synthase complex consists of a soluble F(1) head domain (subunits alpha(3) and beta(3)) - the catalytic core - and a membrane F(0) domain - the membrane proton channel (subunits c, a, 8, e, f, g, k and j). These two domains are linked by a central stalk (subunits gamma, delta, and epsilon) rotating inside the F1 region and a stationary peripheral stalk (subunits F6, b, d, and OSCP). Interacts with PRICKLE3.

It is found in the mitochondrion membrane. Subunit 8, of the mitochondrial membrane ATP synthase complex (F(1)F(0) ATP synthase or Complex V) that produces ATP from ADP in the presence of a proton gradient across the membrane which is generated by electron transport complexes of the respiratory chain. ATP synthase complex consist of a soluble F(1) head domain - the catalytic core - and a membrane F(1) domain - the membrane proton channel. These two domains are linked by a central stalk rotating inside the F(1) region and a stationary peripheral stalk. During catalysis, ATP synthesis in the catalytic domain of F(1) is coupled via a rotary mechanism of the central stalk subunits to proton translocation. In vivo, can only synthesize ATP although its ATP hydrolase activity can be activated artificially in vitro. Part of the complex F(0) domain. The chain is ATP synthase F(0) complex subunit 8 from Canis lupus familiaris (Dog).